We begin with the raw amino-acid sequence, 155 residues long: Small ribosomal subunit protein uS7 (155 aa).

This sequence belongs to the universal ribosomal protein uS7 family. Part of the 30S ribosomal subunit. Contacts proteins S9 and S11.

One of the primary rRNA binding proteins, it binds directly to 16S rRNA where it nucleates assembly of the head domain of the 30S subunit. Is located at the subunit interface close to the decoding center, probably blocks exit of the E-site tRNA. This is Small ribosomal subunit protein uS7 from Mycoplasma genitalium (strain ATCC 33530 / DSM 19775 / NCTC 10195 / G37) (Mycoplasmoides genitalium).